Consider the following 69-residue polypeptide: uncharacterized protein (69 aa).

The helical transmembrane segment at 13-35 (IRSINPTLLNFINYFLLIVPQFI) threads the bilayer.

Its subcellular location is the membrane. This is an uncharacterized protein from Saccharomyces cerevisiae (strain ATCC 204508 / S288c) (Baker's yeast).